We begin with the raw amino-acid sequence, 186 residues long: GMP synthase [glutamine-hydrolyzing] subunit A (186 aa).

The 184-residue stretch at 3–186 (MILIINNHGQ…FENFYDVCRS (184 aa)) folds into the Glutamine amidotransferase type-1 domain. Cys-77 (nucleophile) is an active-site residue. Residues His-164 and Glu-166 contribute to the active site.

In terms of assembly, heterodimer composed of a glutamine amidotransferase subunit (A) and a GMP-binding subunit (B).

It carries out the reaction XMP + L-glutamine + ATP + H2O = GMP + L-glutamate + AMP + diphosphate + 2 H(+). Its pathway is purine metabolism; GMP biosynthesis; GMP from XMP (L-Gln route): step 1/1. Its function is as follows. Catalyzes the synthesis of GMP from XMP. The polypeptide is GMP synthase [glutamine-hydrolyzing] subunit A (Methanothermobacter thermautotrophicus (strain ATCC 29096 / DSM 1053 / JCM 10044 / NBRC 100330 / Delta H) (Methanobacterium thermoautotrophicum)).